The sequence spans 215 residues: MASATLTAWIKMPSFLKKILKLRGRRQEDESRSRMLSDSSMLSCRVNQLTSEGTEAGSTTPSTLPKDQALLIEPKVRAKEKSQHRRPKIIDQVRRVESLGEQASQRQKHMLETLINKIYTGPLGEELVQTLYLRIWAMEETPESLKILQMREDIRDQVLKMKTERWLRTLIRGEKTKLKDFQKRYEEVHPYLMKEKVEQVIMEEAWSLAAHIVQE.

Residues 12-34 (MPSFLKKILKLRGRRQEDESRSR) form a disordered region. An involved in self-degradation and in host STAT1 degradation region spans residues 15–22 (FLKKILKL).

Belongs to the respirovirus protein C family. In terms of assembly, the different isoforms interact (via C-terminus) with unphosphorylated and phosphorylated human STAT1 (via N-terminus), favoring the formation of parallel STAT1 homodimers. The different isoforms do not interact with host STAT2. C protein interacts with L protein; this interaction has an inhibitory effect on viral transcription and replication. Y1 and Y2 proteins are produced not only by alternative initiation, but also by proteolytic cleavage of C'. Only alternative initiation is detected in vitro, whereas in vivo cleavage seems to be predominant.

The protein localises to the host cytoplasm. The protein resides in the virion. In terms of biological role, the different isoforms prevent the establishment of cellular antiviral state by blocking the interferon-alpha/beta (IFN-alpha/beta) and IFN-gamma signaling pathways. They inhibit IFN-alpha/beta induced tyrosine phosphorylation of STAT1 and STAT2. Blocking the IFN-alpha/beta pathway requires binding to STAT1 in the cytoplasm. They inhibit IFN-gamma induced serine phosphorylation of STAT1. Block the IFN-gamma pathway by binding to and stabilizing the parallel form of the STAT1 dimer, further inducing high-molecular-weight complex (HMWC) formation and inhibition of transcription by IFN-gamma. May also have a role in preventing the cell to enter apoptosis. Modulate regulation of viral transcription and replication. Overexpression inhibits the viral RNA polymerase. The absence of all C', C, Y1 and Y2 proteins leads to viral delayed growth. Plays an important role in virion particles release. Modulates virion shape. The chain is C' protein (P/V/C) from Sendai virus (strain Z) (SeV).